Here is a 192-residue protein sequence, read N- to C-terminus: Putative B3 domain-containing protein At4g03160 (192 aa).

Residues 22–44 are disordered; it reads VFFDQEEEEEDEEEEYDEESVCE. Positions 25 to 44 are enriched in acidic residues; the sequence is DQEEEEEDEEEEYDEESVCE. A DNA-binding region (TF-B3) is located at residues 75–173; sequence KDNQYRLMLG…EICFAIDSTR (99 aa).

The protein resides in the nucleus. The protein is Putative B3 domain-containing protein At4g03160 of Arabidopsis thaliana (Mouse-ear cress).